The following is a 569-amino-acid chain: MPYRISRQAYAETYGPTTGDRVRLADTDLILEVEKDYTVYGDEVKFGGGKVIRDGMGQSQTPRTEGAVDTVITNALILDWWGIVKADVGLKDGRIVGIGKAGNPDTQQGVTIVVGPGTEAIAGEGHILTAGGIDTHIHFICPQQIETALASGVTTLMGGGTGPATGTNATTCTPGAFHIGRMLQAAEGLPVNLGFFGKGNASTPEALEEQVRAGACGLKLHEDWGTTPATIDACLSVADRMDVQVCIHTDTLNEAGFVEDTIAAIKGRTIHTFHTEGAGGGHAPDIIKICGEANVLPSSTNPTRPYTRNTLEEHLDMLMVCHHLDPKIPEDVAFAESRIRRETIAAEDILHDLGAFSIIASDSQAMGRVGEVITRTFQTAHKMKVQRGALPEDSARNDNHRLTRYIAKVTINPALAHGISSEVGSIETGKLADLVLWKPGFFGIRPELVVKGGSIVWAQMGDANASIPTPGPVHGRPMFGAFGKALAPSCLTFVSEAAMDNDIQSKLRLDRTCMAVKETRSVGKSALKLNAALPKVSVDPQTYEVFADGELLTCEPAEVLPLAQRYLLL.

Residues 131 to 569 enclose the Urease domain; that stretch reads GGIDTHIHFI…LPLAQRYLLL (439 aa). Residues His136, His138, and Lys219 each coordinate Ni(2+). At Lys219 the chain carries N6-carboxylysine. A substrate-binding site is contributed by His221. The Ni(2+) site is built by His248 and His274. The active-site Proton donor is the His322. Residue Asp362 participates in Ni(2+) binding.

The protein belongs to the metallo-dependent hydrolases superfamily. Urease alpha subunit family. In terms of assembly, heterotrimer of UreA (gamma), UreB (beta) and UreC (alpha) subunits. Three heterotrimers associate to form the active enzyme. It depends on Ni cation as a cofactor. In terms of processing, carboxylation allows a single lysine to coordinate two nickel ions.

It is found in the cytoplasm. The catalysed reaction is urea + 2 H2O + H(+) = hydrogencarbonate + 2 NH4(+). It participates in nitrogen metabolism; urea degradation; CO(2) and NH(3) from urea (urease route): step 1/1. The polypeptide is Urease subunit alpha (Parasynechococcus marenigrum (strain WH8102)).